We begin with the raw amino-acid sequence, 113 residues long: UPF0482 protein YnfB (113 aa).

Positions 1–28 (MKITLSKRIDLLAFLLPCALALSTTVHA) are cleaved as a signal peptide.

The protein belongs to the UPF0482 family.

This is UPF0482 protein YnfB from Escherichia coli O157:H7.